Consider the following 121-residue polypeptide: Protein yippee-like At3g55890 (121 aa).

One can recognise a Yippee domain in the interval 12–109; sequence NIYICKLCKT…LELYKISGPH (98 aa). Residues cysteine 16, cysteine 19, cysteine 72, and cysteine 75 each coordinate Zn(2+).

It belongs to the yippee family.

This chain is Protein yippee-like At3g55890, found in Arabidopsis thaliana (Mouse-ear cress).